A 314-amino-acid chain; its full sequence is UDP-glucose 4-epimerase (314 aa).

NAD(+)-binding positions include 11-12 (FI), 31-36 (DNFATG), 56-57 (DI), and 77-81 (LAAQI). Residues Ser-121 and Tyr-146 each coordinate substrate. NAD(+) is bound by residues Tyr-146 and Lys-150. Tyr-146 (proton acceptor) is an active-site residue. Substrate is bound by residues Asn-175, 189–190 (VV), 204–206 (RVF), Arg-213, and 271–274 (RLGD).

The protein belongs to the NAD(P)-dependent epimerase/dehydratase family. Homodimer. The cofactor is NAD(+).

It catalyses the reaction UDP-alpha-D-glucose = UDP-alpha-D-galactose. The protein operates within carbohydrate metabolism; galactose metabolism. In terms of biological role, involved in the metabolism of galactose. Catalyzes the conversion of UDP-galactose (UDP-Gal) to UDP-glucose (UDP-Glc) through a mechanism involving the transient reduction of NAD. In Mycobacterium tuberculosis (strain CDC 1551 / Oshkosh), this protein is UDP-glucose 4-epimerase (galE1).